The following is a 491-amino-acid chain: Probable polygalacturonase (491 aa).

Residues 15-35 (PIVSFYCFQVVSVLVAVVLLL) form a helical membrane-spanning segment. N-linked (GlcNAc...) asparagine glycosylation is found at N165, N175, and N214. PbH1 repeat units follow at residues 230–256 (SRNI…NPDS), 257–278 (CTNT…AVKS), 319–340 (IQDV…RIKT), and 348–369 (VKDI…WMTG). D271 acts as the Proton donor in catalysis. 2 N-linked (GlcNAc...) asparagine glycosylation sites follow: N399 and N421.

It belongs to the glycosyl hydrolase 28 family.

The protein localises to the membrane. It catalyses the reaction (1,4-alpha-D-galacturonosyl)n+m + H2O = (1,4-alpha-D-galacturonosyl)n + (1,4-alpha-D-galacturonosyl)m.. In Vitis vinifera (Grape), this protein is Probable polygalacturonase.